Consider the following 122-residue polypeptide: MSRLCLSAALLLLLGALVASTPGDEESSLVRAGPPGFCREPPYTGPCSAHFVRYFYNATTGLCQSFVYGGCRGKQNNFMDEKECLHTCDTCAKAQGKRGNCASEMLKSTRPQGWAVAAFQMG.

Residues 1-20 (MSRLCLSAALLLLLGALVAS) form the signal peptide. Residues 21–29 (TPGDEESSL) constitute a propeptide that is removed on maturation. In terms of domain architecture, BPTI/Kunitz inhibitor spans 38 to 88 (CREPPYTGPCSAHFVRYFYNATTGLCQSFVYGGCRGKQNNFMDEKECLHTC). 3 cysteine pairs are disulfide-bonded: Cys38–Cys88, Cys47–Cys71, and Cys63–Cys84.

Expressed only in the uterus and the endometrium.

Inhibitor of plasmin and trypsin. Also has a weak affinity for chymotrypsin. Could serve to neutralize the activities of one or more serine proteinases generated by the proliferating trophoblast during the formation of the noninvasive placenta. The chain is Uterine plasmin/trypsin inhibitor from Sus scrofa (Pig).